The chain runs to 348 residues: MSLVGCHILSIDHFSRQDLEELLMTAKLLEPVAQRKVRCNVLDGSVMANLFFEASTRTRMSFHTAFARLGGSVVDTTGFTFSSISKGESLSDTARVIAGYADVIVMRHPDQGSVAEFASKINVPVINAGDGIGEHPSQALLDYYTINNEFERLKKNIDGMTIAMVGDLKNGRTIHSLAKLLSLFDNIHFRFIAPETLRAPAELLELLRSRGHDVQEFDDIANGLPGTDIIYATRIQRERIKDGELMEGYSEKFRINAAAVARYATPETIIMHPLPRDSRAGAFDLSTDLDNHPQLAIFRQADNGVTVRMAIFAMVLNVHRGIESFFSPHRGFRPDRYGQGDADFYQLK.

2 residues coordinate carbamoyl phosphate: arginine 57 and threonine 58. Lysine 86 is an L-aspartate binding site. Residues arginine 107, histidine 135, and glutamine 138 each coordinate carbamoyl phosphate. Positions 172 and 234 each coordinate L-aspartate. The carbamoyl phosphate site is built by leucine 274 and proline 275.

It belongs to the aspartate/ornithine carbamoyltransferase superfamily. ATCase family. In terms of assembly, heterododecamer (2C3:3R2) of six catalytic PyrB chains organized as two trimers (C3), and six regulatory PyrI chains organized as three dimers (R2).

The enzyme catalyses carbamoyl phosphate + L-aspartate = N-carbamoyl-L-aspartate + phosphate + H(+). It functions in the pathway pyrimidine metabolism; UMP biosynthesis via de novo pathway; (S)-dihydroorotate from bicarbonate: step 2/3. Functionally, catalyzes the condensation of carbamoyl phosphate and aspartate to form carbamoyl aspartate and inorganic phosphate, the committed step in the de novo pyrimidine nucleotide biosynthesis pathway. This is Aspartate carbamoyltransferase catalytic subunit from Dichelobacter nodosus (strain VCS1703A).